Here is a 308-residue protein sequence, read N- to C-terminus: tRNA dimethylallyltransferase (308 aa).

ATP is bound at residue 10-17 (GPTASGKT). Substrate is bound at residue 12–17 (TASGKT). Interaction with substrate tRNA stretches follow at residues 35-38 (DSSL) and 159-163 (QRIFR).

This sequence belongs to the IPP transferase family. Monomer. Mg(2+) is required as a cofactor.

The enzyme catalyses adenosine(37) in tRNA + dimethylallyl diphosphate = N(6)-dimethylallyladenosine(37) in tRNA + diphosphate. Functionally, catalyzes the transfer of a dimethylallyl group onto the adenine at position 37 in tRNAs that read codons beginning with uridine, leading to the formation of N6-(dimethylallyl)adenosine (i(6)A). The chain is tRNA dimethylallyltransferase from Francisella philomiragia subsp. philomiragia (strain ATCC 25017 / CCUG 19701 / FSC 153 / O#319-036).